We begin with the raw amino-acid sequence, 394 residues long: HORMA domain-containing protein 1 (394 aa).

An HORMA domain is found at 24-226; the sequence is HQSLVLVKRL…TPFHIFKVKV (203 aa). Basic and acidic residues predominate over residues 253–282; the sequence is ILRDKDVEDEQEHYTSDDLDIETKMEEQEK. The tract at residues 253-394 is disordered; sequence ILRDKDVEDE…RKFSEPKEHI (142 aa). The span at 288-300 shows a compositional bias: acidic residues; it reads ELEEPSLVCEEDE. Composition is skewed to polar residues over residues 310-324 and 343-352; these read LSIS…VNKT and KMANGNQPVK. Basic and acidic residues predominate over residues 362-374; the sequence is QHESGRIVLHHFD. At Ser-376 the chain carries Phosphoserine. Positions 383-386 match the Nuclear localization signal motif; the sequence is KRRK.

In terms of assembly, interacts with HORMAD2. Interacts with IHO1. Post-translationally, phosphorylated at Ser-377 in a SPO11-dependent manner. As to expression, testis-specific. Over-expressed in carcinomas.

It localises to the nucleus. It is found in the chromosome. Functionally, plays a key role in meiotic progression. Regulates 3 different functions during meiosis: ensures that sufficient numbers of processed DNA double-strand breaks (DSBs) are available for successful homology search by increasing the steady-state numbers of single-stranded DSB ends. Promotes synaptonemal-complex formation independently of its role in homology search. Plays a key role in the male mid-pachytene checkpoint and the female meiotic prophase checkpoint: required for efficient build-up of ATR activity on unsynapsed chromosome regions, a process believed to form the basis of meiotic silencing of unsynapsed chromatin (MSUC) and meiotic prophase quality control in both sexes. The sequence is that of HORMA domain-containing protein 1 from Homo sapiens (Human).